Here is a 68-residue protein sequence, read N- to C-terminus: Conotoxin Lt5.11 (68 aa).

A signal peptide spans 1–19 (MLCLPVFIILLLLASPAAP). A propeptide spanning residues 20 to 54 (KSLETRIQNDLIRAGLTDADLKTEKGFLSGLLNVA) is cleaved from the precursor.

The protein belongs to the conotoxin T superfamily. Contains 2 disulfide bonds that can be either 'C1-C3, C2-C4' or 'C1-C4, C2-C3', since these disulfide connectivities have been observed for conotoxins with cysteine framework V (for examples, see AC P0DQQ7 and AC P81755). In terms of tissue distribution, expressed by the venom duct.

The protein localises to the secreted. In Conus litteratus (Lettered cone), this protein is Conotoxin Lt5.11.